The following is a 136-amino-acid chain: Gilles de la Tourette syndrome chromosomal region candidate gene 1 protein (136 aa).

The helical transmembrane segment at 73 to 93 (AICMEVFLFLWFIAPIYACVC) threads the bilayer.

It is found in the membrane. This is Gilles de la Tourette syndrome chromosomal region candidate gene 1 protein (GTSCR1) from Homo sapiens (Human).